A 620-amino-acid chain; its full sequence is Sodium-dependent dopamine transporter (620 aa).

The Cytoplasmic portion of the chain corresponds to 1-56 (MSKSKCSVGLMSSVVAPAKEPNAMGPKEVELILVKEQNGVQLTSSTLTNPRQSPVE). Residues 57–95 (AQDRETWGKKIDFLLSVIGFAVDLANVWRFPYLCYKNGG) form a discontinuously helical membrane-spanning segment. 5 residues coordinate Na(+): Gly-75, Ala-77, Val-78, Asp-79, and Asn-82. Asp-79 lines the dopamine pocket. 2 helical membrane-spanning segments follow: residues 96-127 (GAFL…NREG) and 128-171 (AAGV…FSSF). 2 residues coordinate dopamine: Ser-149 and Gly-153. The Extracellular segment spans residues 172 to 236 (TTELPWIHCN…SHGIDDLGPP (65 aa)). A disulfide bridge links Cys-180 with Cys-189. Asn-181, Asn-188, and Asn-205 each carry an N-linked (GlcNAc...) asparagine glycan. 2 consecutive transmembrane segments (helical) span residues 237 to 256 (RWQL…FSLW) and 257 to 287 (KGVK…GVTL). Residues 288 to 306 (PGAIDGIRAYLSVDFYRLC) are Extracellular-facing. Residues 307–335 (EASVWIDAATQVCFSLGVGFGVLIAFSSY) form a discontinuously helical membrane-spanning segment. Chloride is bound at residue Gln-317. Dopamine is bound at residue Phe-320. Residues Ser-321 and Asn-353 each coordinate Na(+). Ser-321 contacts chloride. The chain crosses the membrane as a helical span at residues 336–376 (NKFTNNCYRDAIVTTSINSLTSFSSGFVVFSFLGYMAQKHS). Ser-357 lines the chloride pocket. The Extracellular segment spans residues 377–400 (VPIGDVAKDGPGLIFIIYPEAIAT). A run of 3 helical transmembrane segments spans residues 401-442 (LPLS…QLLH), 443-466 (RHRE…CVTN), and 467-499 (GGIY…AWFY). The Na(+) site is built by Leu-418, Asp-421, and Ser-422. Dopamine-binding residues include Ser-422 and Ala-423. At 500–516 (GVGQFSDDIQQMTGQRP) the chain is on the cytoplasmic side. A helical transmembrane segment spans residues 517-542 (SLYWRLCWKLVSPCFLLFVVVVSIVT). Residues 543 to 553 (FRPPHYGAYIF) lie on the Extracellular side of the membrane. Residues 554-583 (PDWANALGWVIATSSMAMVPIYAAYKFCSL) traverse the membrane as a helical segment. Positions 561-590 (GWVIATSSMAMVPIYAAYKFCSLPGSFREK) are interaction with TGFB1I1. The Cytoplasmic portion of the chain corresponds to 584 to 620 (PGSFREKLAYAIAPEKDRELVDRGEVRQFTLRHWLKV).

Belongs to the sodium:neurotransmitter symporter (SNF) (TC 2.A.22) family. SLC6A3 subfamily. As to quaternary structure, monomer. Homooligomer; disulfide-linked. Interacts with PRKCABP and TGFB1I1. Interacts (via N-terminus) with SYNGR3 (via N-terminus). Interacts with SLC18A2. Interacts with TOR1A (ATP-bound); TOR1A regulates SLC6A3 subcellular location. Interacts with alpha-synuclein/SNCA. Interacts with SEPTIN4.

The protein resides in the cell membrane. It localises to the cell projection. Its subcellular location is the neuron projection. It is found in the axon. It carries out the reaction dopamine(out) + chloride(out) + Na(+)(out) = dopamine(in) + chloride(in) + Na(+)(in). It catalyses the reaction (R)-noradrenaline(out) + chloride(out) + Na(+)(out) = (R)-noradrenaline(in) + chloride(in) + Na(+)(in). The catalysed reaction is dopamine(out) + chloride(out) + 2 Na(+)(out) = dopamine(in) + chloride(in) + 2 Na(+)(in). Inhibited by zinc ions. Its function is as follows. Mediates sodium- and chloride-dependent transport of dopamine. Also mediates sodium- and chloride-dependent transport of norepinephrine (also known as noradrenaline). Regulator of light-dependent retinal hyaloid vessel regression, downstream of OPN5 signaling. The polypeptide is Sodium-dependent dopamine transporter (SLC6A3) (Macaca fascicularis (Crab-eating macaque)).